The primary structure comprises 393 residues: Dual-specificity RNA methyltransferase RlmN (393 aa).

Glu-115 functions as the Proton acceptor in the catalytic mechanism. Residues 121–365 (EEDRGTLCIS…APIRKTRGDD (245 aa)) form the Radical SAM core domain. Residues Cys-128 and Cys-370 are joined by a disulfide bond. [4Fe-4S] cluster contacts are provided by Cys-135, Cys-139, and Cys-142. S-adenosyl-L-methionine is bound by residues 194 to 195 (GE), Ser-226, 248 to 250 (SFH), and Asn-327. The active-site S-methylcysteine intermediate is the Cys-370.

It belongs to the radical SAM superfamily. RlmN family. [4Fe-4S] cluster serves as cofactor.

The protein localises to the cytoplasm. The enzyme catalyses adenosine(2503) in 23S rRNA + 2 reduced [2Fe-2S]-[ferredoxin] + 2 S-adenosyl-L-methionine = 2-methyladenosine(2503) in 23S rRNA + 5'-deoxyadenosine + L-methionine + 2 oxidized [2Fe-2S]-[ferredoxin] + S-adenosyl-L-homocysteine. The catalysed reaction is adenosine(37) in tRNA + 2 reduced [2Fe-2S]-[ferredoxin] + 2 S-adenosyl-L-methionine = 2-methyladenosine(37) in tRNA + 5'-deoxyadenosine + L-methionine + 2 oxidized [2Fe-2S]-[ferredoxin] + S-adenosyl-L-homocysteine. In terms of biological role, specifically methylates position 2 of adenine 2503 in 23S rRNA and position 2 of adenine 37 in tRNAs. m2A2503 modification seems to play a crucial role in the proofreading step occurring at the peptidyl transferase center and thus would serve to optimize ribosomal fidelity. The chain is Dual-specificity RNA methyltransferase RlmN from Ruegeria pomeroyi (strain ATCC 700808 / DSM 15171 / DSS-3) (Silicibacter pomeroyi).